A 974-amino-acid chain; its full sequence is MMLGEHLMSWSKTGIIAYSDSQSSNANICLTFLESINGINWRFHTPQKYVLHPQLHEVQYQESSSTLSTHSTTTSVNGSTTAGVGSTPNFGGNSNKSPPQFFYNISSIHWNNWFSLPGDMLAVCDELGNMTMLITGQRPDRATTYEKLTMVFQDNVYKIYNHVMPLKPVDKLKPMNIERKQTRKEYNTSILEFRWLTSSKSVIVSQFCAFDSSSNTYRSRAQQVPPYGVYHPPFIKYACLAIRKNGQIDFWYQFSNSKDHKKITLQLLDTSNQRFKDLQWLEFARITPMNDDQCMLITTYSKLSKNISFYKLHVNWNLNATKPNVLNDPSLKIQFILSTTLDPTDDEGHVLKLENLHVVSKSSIEKDPSPEILVLYNVCDTSKSLVKRYRLAPTQLSAEYLVILKPDLNIDRNNSTNQIFQSRRYNLRRHSDIVLDKKVTLITSEMFDAFVSFYFEDGTIESYNQNDWKLETERLISQSQLGKFKNIIASPLSAGFNYGKLPLPPSVEWMKVSPSMCGVIVKQYNKKWPQFYAAVQKNYADPEKDSINATALAFGYVKSLHKQISAEDLTIAAKTHILRISFLDRKRAKEFITTLLKSLYSFFNISPDAPKEIMDKIITSRPLQKIMLLQLELGSCFSQENIEEMARVILYLKNVLFAFNGVARNFHFAIEQISNNSNQQQNPKLFQTIFSKQDLIHSLIPVAKWFVKFITYLTQEILILINDPTNKEYTLVHGIFGAKMSRTLILSILNEIKKVTQIVAKFPETSYPILNESSTFLKLVLSESPVDFEKFETFLVDVNNKFIALCEQQPSQEREFSLLVKAEIPPEYAKVGDFLLQYANNAVISHANAAAVYFADTSGLKISNSEFFNPEIFHLLQPLEEGLIIDTDKLPIKNRTSKSFSKLLYDDVTCDKLSVSEISDGKLKRCSRCGSVTRAGNIISSDKTIVPTSIQTKRWPTMYTRLCICSGMLFEMDG.

Positions 62-92 (ESSSTLSTHSTTTSVNGSTTAGVGSTPNFGG) are disordered. Low complexity predominate over residues 63–75 (SSSTLSTHSTTTS). Residues 76–92 (VNGSTTAGVGSTPNFGG) show a composition bias toward polar residues. The Nuclear localization signal signature appears at 889-893 (KLPIK).

This sequence belongs to the Mediator complex subunit 16 family. In terms of assembly, component of the Mediator complex, which is composed of at least 21 subunits that form three structurally distinct submodules. The Mediator head module contains MED6, MED8, MED11, SRB4/MED17, SRB5/MED18, ROX3/MED19, SRB2/MED20 and SRB6/MED22, the middle module contains MED1, MED4, NUT1/MED5, MED7, CSE2/MED9, NUT2/MED10, SRB7/MED21 and SOH1/MED31, and the tail module contains MED2, PGD1/MED3, RGR1/MED14, GAL11/MED15 and SIN4/MED16. The head and the middle modules interact directly with RNA polymerase II, whereas the elongated tail module interacts with gene-specific regulatory proteins. Interacts with HOG1. In terms of processing, phosphorylated by KIN28.

It is found in the nucleus. Its function is as follows. Component of the Mediator complex, a coactivator involved in the regulated transcription of nearly all RNA polymerase II-dependent genes. Mediator functions as a bridge to convey information from gene-specific regulatory proteins to the basal RNA polymerase II transcription machinery. The Mediator complex, having a compact conformation in its free form, is recruited to promoters by direct interactions with regulatory proteins and serves for the assembly of a functional preinitiation complex with RNA polymerase II and the general transcription factors. The Mediator complex unfolds to an extended conformation and partially surrounds RNA polymerase II, specifically interacting with the unphosphorylated form of the C-terminal domain (CTD) of RNA polymerase II. The Mediator complex dissociates from the RNA polymerase II holoenzyme and stays at the promoter when transcriptional elongation begins. The polypeptide is Mediator of RNA polymerase II transcription subunit 16 (SIN4) (Saccharomyces cerevisiae (strain ATCC 204508 / S288c) (Baker's yeast)).